The sequence spans 85 residues: Anti-neuroexcitation peptide 3 (85 aa).

A signal peptide spans 1-21 (MKLSLLLVISASMLIDGLVNA). In terms of domain architecture, LCN-type CS-alpha/beta spans 22–82 (DGYIRGSNGC…TWKSESNTCG (61 aa)). Cystine bridges form between Cys31–Cys81, Cys35–Cys56, Cys42–Cys63, and Cys46–Cys65.

Belongs to the long (4 C-C) scorpion toxin superfamily. Sodium channel inhibitor family. Beta subfamily. As to expression, expressed by the venom gland.

It localises to the secreted. In terms of biological role, binds to sodium channels (Nav) and inhibits them. Recombinant ANEP delays the convulsion seizure of model animals by 18% and shows anti-neuroexcitatory activity. The protein is Anti-neuroexcitation peptide 3 of Olivierus martensii (Manchurian scorpion).